The chain runs to 121 residues: Neuromedin-B (121 aa).

An N-terminal signal peptide occupies residues 1-24; sequence MTRQAGSSWLLRGLLLFALFASGV. Methionine amide is present on methionine 56. Residues 60 to 121 constitute a propeptide that is removed on maturation; it reads SLEPPSLSLV…RRLLEPLLQK (62 aa).

This sequence belongs to the bombesin/neuromedin-B/ranatensin family. In the hindbrain, expressed in the medulla surrounding the lateral half of the facial nucleus. Also expressed in the olfactory bulb and hippocampus. Detected in a subset of neurons distributed throughout the retrotrapezoid nucleus/parafacial respiratory group (RTN/pFRG). Within the RTN/pFRG, expressed in neuronal subpopulations distinct from those expressing Grp. Expressed in lung.

The protein resides in the secreted. It is found in the cell projection. Its subcellular location is the neuron projection. Its function is as follows. Stimulates smooth muscle contraction. Induces sighing by acting directly on the pre-Botzinger complex, a cluster of several thousand neurons in the ventrolateral medulla responsible for inspiration during respiratory activity. Contributes to the induction of sneezing following exposure to chemical irritants or allergens which causes release of NMB by nasal sensory neurons and activation of NMBR-expressing neurons in the sneeze-evoking region of the brainstem. These in turn activate neurons of the caudal ventral respiratory group, giving rise to the sneeze reflex. Contributes to induction of acute itch, possibly through activation of the NMBR receptor on dorsal root ganglion neurons. Increases expression of NMBR and steroidogenic mediators STAR, CYP11A1 and HSD3B1 in Leydig cells, induces secretion of testosterone by Leydig cells and also promotes Leydig cell proliferation. Plays a role in the innate immune response to influenza A virus infection by enhancing interferon alpha expression and reducing expression of IL6. Plays a role in CSF1-induced proliferation of osteoclast precursors by contributing to the positive regulation of the expression of the CSF1 receptor CSF1R. The polypeptide is Neuromedin-B (Nmb) (Mus musculus (Mouse)).